A 160-amino-acid polypeptide reads, in one-letter code: Competence protein ComGD (160 aa).

A helical transmembrane segment spans residues alanine 30–leucine 50.

As to quaternary structure, the transformation pili are flexible filaments, consisting mainly of the major pilin ComGC and smaller amounts of the minor pilins, including at least ComGD, ComGF and ComGG, and perhaps ComGE. Interacts with ComGE. Interacts with ComGF. Interacts with ComGG.

The protein resides in the cell membrane. Its subcellular location is the cell surface. The protein localises to the fimbrium. Its function is as follows. Required for formation of the type IV-like pilus (T4P) that plays a role in transformation. Transformation pili are dynamically extended and retracted, perhaps thereby promoting DNA uptake and transformation. Involved in transformation. Required for DNA binding. In Streptococcus pneumoniae (strain ATCC BAA-255 / R6), this protein is Competence protein ComGD.